The sequence spans 116 residues: Protein Wnt-5b (116 aa).

A lipid anchor (O-palmitoleoyl serine; by PORCN) is attached at S1. 2 N-linked (GlcNAc...) asparagine glycosylation sites follow: N69 and N83. An intrachain disulfide couples C82 to C97.

This sequence belongs to the Wnt family. In terms of processing, palmitoleoylation is required for efficient binding to frizzled receptors. Depalmitoleoylation leads to Wnt signaling pathway inhibition.

It is found in the secreted. Its subcellular location is the extracellular space. The protein localises to the extracellular matrix. Functionally, ligand for members of the frizzled family of seven transmembrane receptors. Probable developmental protein. May be a signaling molecule which affects the development of discrete regions of tissues. Is likely to signal over only few cell diameters. The protein is Protein Wnt-5b (WNT-5B) of Plestiodon skiltonianus (Western skink).